Consider the following 348-residue polypeptide: Holliday junction branch migration complex subunit RuvB (348 aa).

Residues 4 to 184 are large ATPase domain (RuvB-L); sequence ADRLIAASGR…FGIVQRLEFY (181 aa). ATP contacts are provided by residues I23, R24, G65, K68, T69, T70, 131–133, R174, Y184, and R221; that span reads EDF. T69 is a Mg(2+) binding site. A small ATPAse domain (RuvB-S) region spans residues 185 to 255; it reads NDKDLSTIVS…VADMALNLLD (71 aa). Residues 258–348 form a head domain (RuvB-H) region; sequence ERGFDHSDRR…GGDFSEPGDE (91 aa). DNA is bound by residues R294, R313, and R318.

Belongs to the RuvB family. Homohexamer. Forms an RuvA(8)-RuvB(12)-Holliday junction (HJ) complex. HJ DNA is sandwiched between 2 RuvA tetramers; dsDNA enters through RuvA and exits via RuvB. An RuvB hexamer assembles on each DNA strand where it exits the tetramer. Each RuvB hexamer is contacted by two RuvA subunits (via domain III) on 2 adjacent RuvB subunits; this complex drives branch migration. In the full resolvosome a probable DNA-RuvA(4)-RuvB(12)-RuvC(2) complex forms which resolves the HJ.

The protein localises to the cytoplasm. The enzyme catalyses ATP + H2O = ADP + phosphate + H(+). Its function is as follows. The RuvA-RuvB-RuvC complex processes Holliday junction (HJ) DNA during genetic recombination and DNA repair, while the RuvA-RuvB complex plays an important role in the rescue of blocked DNA replication forks via replication fork reversal (RFR). RuvA specifically binds to HJ cruciform DNA, conferring on it an open structure. The RuvB hexamer acts as an ATP-dependent pump, pulling dsDNA into and through the RuvAB complex. RuvB forms 2 homohexamers on either side of HJ DNA bound by 1 or 2 RuvA tetramers; 4 subunits per hexamer contact DNA at a time. Coordinated motions by a converter formed by DNA-disengaged RuvB subunits stimulates ATP hydrolysis and nucleotide exchange. Immobilization of the converter enables RuvB to convert the ATP-contained energy into a lever motion, pulling 2 nucleotides of DNA out of the RuvA tetramer per ATP hydrolyzed, thus driving DNA branch migration. The RuvB motors rotate together with the DNA substrate, which together with the progressing nucleotide cycle form the mechanistic basis for DNA recombination by continuous HJ branch migration. Branch migration allows RuvC to scan DNA until it finds its consensus sequence, where it cleaves and resolves cruciform DNA. This Pseudomonas putida (strain ATCC 47054 / DSM 6125 / CFBP 8728 / NCIMB 11950 / KT2440) protein is Holliday junction branch migration complex subunit RuvB.